Here is a 351-residue protein sequence, read N- to C-terminus: Uroporphyrinogen decarboxylase (351 aa).

Substrate-binding positions include 25-29 (RQAGR), Asp-74, Tyr-151, Ser-206, and His-325.

This sequence belongs to the uroporphyrinogen decarboxylase family. Homodimer.

Its subcellular location is the cytoplasm. It catalyses the reaction uroporphyrinogen III + 4 H(+) = coproporphyrinogen III + 4 CO2. The protein operates within porphyrin-containing compound metabolism; protoporphyrin-IX biosynthesis; coproporphyrinogen-III from 5-aminolevulinate: step 4/4. In terms of biological role, catalyzes the decarboxylation of four acetate groups of uroporphyrinogen-III to yield coproporphyrinogen-III. The chain is Uroporphyrinogen decarboxylase from Prosthecochloris aestuarii (strain DSM 271 / SK 413).